Reading from the N-terminus, the 458-residue chain is Argininosuccinate lyase (458 aa).

The protein belongs to the lyase 1 family. Argininosuccinate lyase subfamily.

It is found in the cytoplasm. The catalysed reaction is 2-(N(omega)-L-arginino)succinate = fumarate + L-arginine. Its pathway is amino-acid biosynthesis; L-arginine biosynthesis; L-arginine from L-ornithine and carbamoyl phosphate: step 3/3. This chain is Argininosuccinate lyase, found in Actinobacillus pleuropneumoniae serotype 7 (strain AP76).